A 111-amino-acid chain; its full sequence is UPF0339 protein BP0521 (111 aa).

A run of 2 repeats spans residues 9–57 and 60–108. The disordered stretch occupies residues 86 to 111; the sequence is TQARDNGIASVKSNAPGAPTKDQTQA.

It belongs to the UPF0339 family. Duplicated subfamily.

The chain is UPF0339 protein BP0521 from Bordetella pertussis (strain Tohama I / ATCC BAA-589 / NCTC 13251).